Here is a 382-residue protein sequence, read N- to C-terminus: Histidinol-phosphate aminotransferase (382 aa).

The residue at position 215 (Lys-215) is an N6-(pyridoxal phosphate)lysine. A disordered region spans residues 363-382 (NIDNQSKTHSQTSSIRKGTI).

The protein belongs to the class-II pyridoxal-phosphate-dependent aminotransferase family. Histidinol-phosphate aminotransferase subfamily. In terms of assembly, homodimer. Requires pyridoxal 5'-phosphate as cofactor.

The enzyme catalyses L-histidinol phosphate + 2-oxoglutarate = 3-(imidazol-4-yl)-2-oxopropyl phosphate + L-glutamate. The protein operates within amino-acid biosynthesis; L-histidine biosynthesis; L-histidine from 5-phospho-alpha-D-ribose 1-diphosphate: step 7/9. The polypeptide is Histidinol-phosphate aminotransferase (Yersinia pseudotuberculosis serotype O:3 (strain YPIII)).